The chain runs to 286 residues: Rhomboid-type serine protease 2 (286 aa).

6 helical membrane passes run 18–38 (ITQYPALTVGLSVFTFLLLVI), 66–86 (SFYLLFHRGFTHWLLNVVGLF), 99–119 (VFTGVTLNVLAVTAGLQFCIV), 122–142 (LLYPNTQVIGLSGVVFSFMSF), 164–183 (VSIPTLYSPFIFLIVCMVLI), and 188–210 (FWGHLAGISSGYLLALGYIKFLY). The active-site Nucleophile is S133. The active site involves H191.

The protein belongs to the peptidase S54 family.

It localises to the golgi apparatus membrane. The protein resides in the golgi apparatus. Its subcellular location is the cis-Golgi network membrane. It carries out the reaction Cleaves type-1 transmembrane domains using a catalytic dyad composed of serine and histidine that are contributed by different transmembrane domains.. Functionally, probable rhomboid-type serine protease that catalyzes intramembrane proteolysis. The polypeptide is Rhomboid-type serine protease 2 (RBD2) (Debaryomyces hansenii (strain ATCC 36239 / CBS 767 / BCRC 21394 / JCM 1990 / NBRC 0083 / IGC 2968) (Yeast)).